Consider the following 123-residue polypeptide: Alpha-lactalbumin A (123 aa).

Residues 1–123 (KQFTKCELSQ…KLEQWLCEEL (123 aa)) form the C-type lysozyme domain. Cystine bridges form between C6–C120, C28–C111, C61–C77, and C73–C91. Positions 79, 82, 84, 87, and 88 each coordinate Ca(2+).

It belongs to the glycosyl hydrolase 22 family. Lactose synthase (LS) is a heterodimer of a catalytic component, beta1,4-galactosyltransferase (beta4Gal-T1) and a regulatory component, alpha-lactalbumin (LA). As to expression, mammary gland specific. Secreted in milk.

The protein localises to the secreted. Regulatory subunit of lactose synthase, changes the substrate specificity of galactosyltransferase in the mammary gland making glucose a good acceptor substrate for this enzyme. This enables LS to synthesize lactose, the major carbohydrate component of milk. In other tissues, galactosyltransferase transfers galactose onto the N-acetylglucosamine of the oligosaccharide chains in glycoproteins. This Equus caballus (Horse) protein is Alpha-lactalbumin A.